Reading from the N-terminus, the 248-residue chain is Probable transcriptional regulator LumQ (248 aa).

One can recognise an HTH araC/xylS-type domain in the interval 148–246; it reads VLIDNYIEQH…GMSPTRYQFF (99 aa). DNA-binding regions (H-T-H motif) lie at residues 165-186 and 213-236; these read AELS…KSQM and LSQV…RRLY.

Functionally, probable transcriptional regulator. Its target gene(s) is not yet known. In Photobacterium leiognathi, this protein is Probable transcriptional regulator LumQ (lumQ).